Here is a 363-residue protein sequence, read N- to C-terminus: Flagellar P-ring protein (363 aa).

The signal sequence occupies residues 1 to 20 (MKYKLVLAVAVLVFSLPSQA).

This sequence belongs to the FlgI family. As to quaternary structure, the basal body constitutes a major portion of the flagellar organelle and consists of four rings (L,P,S, and M) mounted on a central rod.

The protein localises to the periplasm. Its subcellular location is the bacterial flagellum basal body. Its function is as follows. Assembles around the rod to form the L-ring and probably protects the motor/basal body from shearing forces during rotation. The chain is Flagellar P-ring protein from Shewanella baltica (strain OS223).